The chain runs to 630 residues: MITIDESRNNLFDALGLQRLKDSYMKEDESSPQERFAFIARQFCADDEPLAQRLYDYMSQHWLSPSSPQLSFGRTKQGLPIACFLPYLHDTARGLIDTWAEVSELSMIGGGIGLGVGIRQPDEKSVGIIPHLRTYDASCTAYKQGQTRRGSYAAYLDISHPEILSFLNTRRVGGDHNYKLLNLHNGVNVPDSFMKKIWILSTLAPFVKMDPCPTTETLFKKAVTTLKDSRYFGADDRWLGEVSFAALAEQLDVVNRWDLIDPHTGKVKETIKATELWERIILTRAETGEPYIHWIDTSNRALPQFQKNLGLSIRQSNLCSEVVLPTDETRTAVCCLASLNLDYFDKWCNNEQFYLDVATYLDNVLQYFIDHAPPTLKRAVHSARSERAIGIGALGFHSYLQSKMVDIESLPAYLINKKIFKTISSHLERVNLELGELRGEAPDCVGTGRRFSHMTAIAPNATSSIIMGNTSPSCEPFRANIYKQDTISGSFVTYNKHLKRLLEERIPDNQARERVWSSIKMHDGSVQHLNQLTVQEKKVFKTWPEINQLSLVMLAADRQKWIDQSQSTSLFFNPDERISYVHKIHLKAWLHGLKTLYYFRSRKILTVDKVHHTTTTADPKTENDCTFCEG.

Substrate-binding positions include Ser-67, 82–83 (AC), Gly-111, 317–321 (NLCSE), and 459–463 (PNATS). A disulfide bridge links Cys-83 with Cys-334. Asn-317 acts as the Proton acceptor in catalysis. Cys-319 (cysteine radical intermediate) is an active-site residue. The active-site Proton acceptor is the Glu-321.

It belongs to the ribonucleoside diphosphate reductase large chain family. As to quaternary structure, heterotetramer composed of a homodimer of the large subunit (R1) and a homodimer of the small subunit (R2). Larger multisubunit protein complex are also active, composed of (R1)n(R2)n.

It carries out the reaction a 2'-deoxyribonucleoside 5'-diphosphate + [thioredoxin]-disulfide + H2O = a ribonucleoside 5'-diphosphate + [thioredoxin]-dithiol. Its activity is regulated as follows. Under complex allosteric control mediated by deoxynucleoside triphosphates and ATP binding. The type of nucleotide bound at the specificity site determines substrate preference. It seems probable that ATP makes the enzyme reduce CDP and UDP, dGTP favors ADP reduction and dTTP favors GDP reduction. Its function is as follows. Ribonucleoside-diphosphate reductase holoenzyme provides the precursors necessary for viral DNA synthesis. Allows virus growth in non-dividing cells. Catalyzes the biosynthesis of deoxyribonucleotides from the corresponding ribonucleotides. In Aedes vexans (Inland floodwater mosquito), this protein is Ribonucleoside-diphosphate reductase large subunit.